Reading from the N-terminus, the 256-residue chain is Thiazole synthase (256 aa).

Residue K96 is the Schiff-base intermediate with DXP of the active site. 1-deoxy-D-xylulose 5-phosphate contacts are provided by residues G157, 184-185, and 206-207; these read AG and NT.

Belongs to the ThiG family. Homotetramer. Forms heterodimers with either ThiH or ThiS.

It is found in the cytoplasm. The catalysed reaction is [ThiS sulfur-carrier protein]-C-terminal-Gly-aminoethanethioate + 2-iminoacetate + 1-deoxy-D-xylulose 5-phosphate = [ThiS sulfur-carrier protein]-C-terminal Gly-Gly + 2-[(2R,5Z)-2-carboxy-4-methylthiazol-5(2H)-ylidene]ethyl phosphate + 2 H2O + H(+). The protein operates within cofactor biosynthesis; thiamine diphosphate biosynthesis. In terms of biological role, catalyzes the rearrangement of 1-deoxy-D-xylulose 5-phosphate (DXP) to produce the thiazole phosphate moiety of thiamine. Sulfur is provided by the thiocarboxylate moiety of the carrier protein ThiS. In vitro, sulfur can be provided by H(2)S. In Brucella suis (strain ATCC 23445 / NCTC 10510), this protein is Thiazole synthase.